A 198-amino-acid chain; its full sequence is Cyclin-dependent kinase inhibitor 1B (198 aa).

Over residues 1 to 12 (MSNVRVSNGSPT) the composition is skewed to polar residues. Positions 1–30 (MSNVRVSNGSPTSERRDAKQAEYPKPSACR) are disordered. Ser-10 is subject to Phosphoserine; by UHMK1. Over residues 13–22 (SERRDAKQAE) the composition is skewed to basic and acidic residues. Positions 51-91 (DMEEASQNKWNFDFQNHKPLEGKYEWQEVEKGSLPEFYYRP) are interaction with CDK2. Tyr-74 carries the post-translational modification Phosphotyrosine; by SRC. The segment at 87–198 (FYYRPPRPPK…KKPGLRRRQT (112 aa)) is disordered. Phosphotyrosine; by ABL, LYN and SRC is present on Tyr-88. Residue Tyr-89 is modified to Phosphotyrosine. Polar residues predominate over residues 104–113 (QESQDVSGTR). Positions 126 to 137 (EDTHLVDQKTDA) are enriched in basic and acidic residues. The Nuclear localization signal signature appears at 153–169 (KRPATDDSSPQNKRANR). Thr-157 is subject to Phosphothreonine; by CaMK1, PKB/AKT1 and PIM1. At Thr-170 the chain carries Phosphothreonine. The segment covering 175-186 (SDGSPNAGSVEQ) has biased composition (polar residues). Thr-187 carries the phosphothreonine; by PKB/AKT1, CDK1 and CDK2 modification. Thr-198 is subject to Phosphothreonine; by CaMK1, PKB/AKT1, RPS6KA1, RPS6KA3 and PIM1.

The protein belongs to the CDI family. In terms of assembly, forms a ternary complex composed of CCNE1, CDK2 and CDKN1B. Interacts directly with CCNE1; the interaction is inhibited by CDK2-dependent phosphorylation on Thr-187. Interacts with COPS5, subunit of the COP9 signalosome complex; the interaction leads to CDKN1B degradation. Interacts with NUP50; the interaction leads to nuclear import and degradation of phosphorylated CDKN1B. Interacts with CCND1 and SNX6. Interacts (Thr-198-phosphorylated form) with 14-3-3 proteins, binds strongly YWHAQ, weakly YWHAE and YWHAH, but not YWHAB nor YWHAZ; the interaction with YWHAQ results in translocation to the cytoplasm. Interacts with AKT1 and LYN; the interactions lead to cytoplasmic mislocation, phosphorylation of CDKN1B and inhibition of cell cycle arrest. Forms a ternary complex with CCNA2 and CDK2; CDKN1B inhibits the kinase activity of CDK2 through conformational rearrangements. Interacts (unphosphorylated form) with CDK2. Forms a complex with CDK2 and SPDYA, but does not directly interact with SPDYA. Forms a ternary complex composed of cyclin D, CDK4 and CDKN1B. Interacts (phosphorylated on Tyr-88 and Tyr-89) with CDK4; the interaction is required for cyclin D and CDK4 complex assembly, induces nuclear translocation and activates the CDK4 kinase activity. Interacts with GRB2. Interacts with PIM1. Identified in a complex with SKP1, SKP2 and CKS1B. Interacts with UHMK1; the interaction leads to cytoplasmic mislocation, phosphorylation of CDKN1B and inhibition of cell cycle arrest. Also interacts with CDK1. Dephosphorylated on Thr-187 by PPM1H, leading to CDKN1B stability. Post-translationally, phosphorylated; phosphorylation occurs on serine, threonine and tyrosine residues. Phosphorylation on Ser-10 is the major site of phosphorylation in resting cells, takes place at the G(0)-G(1) phase and leads to protein stability. Phosphorylation on other sites is greatly enhanced by mitogens, growth factors, cMYC and in certain cancer cell lines. The phosphorylated form found in the cytoplasm is inactivate. Phosphorylation on Thr-198 is required for interaction with 14-3-3 proteins. Phosphorylation on Thr-187, by CDK1 and CDK2 leads to protein ubiquitination and proteasomal degradation. Tyrosine phosphorylation promotes this process. Phosphorylation by PKB/AKT1 can be suppressed by LY294002, an inhibitor of the catalytic subunit of PI3K. Phosphorylation on Tyr-88 and Tyr-89 has no effect on binding CDK2, but is required for binding CDK4. Dephosphorylated on tyrosine residues by G-CSF. Dephosphorylated on Thr-187 by PPM1H, leading to CDKN1B stability. In terms of processing, ubiquitinated; in the cytoplasm by the KPC complex (composed of RNF123/KPC1 and UBAC1/KPC2) and, in the nucleus, by SCF(SKP2). The latter requires prior phosphorylation on Thr-187. Ubiquitinated; by a TRIM21-containing SCF(SKP2)-like complex; leads to its degradation. Subject to degradation in the lysosome. Interaction with SNX6 promotes lysosomal degradation.

The protein localises to the nucleus. It is found in the cytoplasm. Its subcellular location is the endosome. Functionally, important regulator of cell cycle progression. Inhibits the kinase activity of CDK2 bound to cyclin A, but has little inhibitory activity on CDK2 bound to SPDYA. Involved in G1 arrest. Potent inhibitor of cyclin E- and cyclin A-CDK2 complexes. Forms a complex with cyclin type D-CDK4 complexes and is involved in the assembly, stability, and modulation of CCND1-CDK4 complex activation. Acts either as an inhibitor or an activator of cyclin type D-CDK4 complexes depending on its phosphorylation state and/or stoichometry. The sequence is that of Cyclin-dependent kinase inhibitor 1B (CDKN1B) from Canis lupus familiaris (Dog).